The chain runs to 266 residues: Ras-like protein family member 12 (266 aa).

Residues 27-34 (GRRGAGKS), 74-78 (DTADL), and 134-137 (NKLD) each bind GTP.

Belongs to the small GTPase superfamily. Ras family.

The enzyme catalyses GTP + H2O = GDP + phosphate + H(+). In Homo sapiens (Human), this protein is Ras-like protein family member 12 (RASL12).